A 580-amino-acid polypeptide reads, in one-letter code: NADH-ubiquinone oxidoreductase chain 5 (580 aa).

The next 16 membrane-spanning stretches (helical) occupy residues Phe12–Met32, Ile50–Ile70, Ile92–Ile112, Ser113–Gln133, Val153–Tyr173, Met183–Phe203, Thr215–Ile235, Trp244–Gly264, Ile274–Gly293, Ala298–Ile320, Cys343–Tyr363, Leu367–Phe387, Ile427–Leu447, Leu463–Phe483, Phe496–Leu516, and Ile560–Asn580.

The protein belongs to the complex I subunit 5 family.

The protein resides in the mitochondrion inner membrane. It catalyses the reaction a ubiquinone + NADH + 5 H(+)(in) = a ubiquinol + NAD(+) + 4 H(+)(out). In terms of biological role, core subunit of the mitochondrial membrane respiratory chain NADH dehydrogenase (Complex I) that is believed to belong to the minimal assembly required for catalysis. Complex I functions in the transfer of electrons from NADH to the respiratory chain. The immediate electron acceptor for the enzyme is believed to be ubiquinone. This is NADH-ubiquinone oxidoreductase chain 5 (mt:ND5) from Anopheles gambiae (African malaria mosquito).